We begin with the raw amino-acid sequence, 90 residues long: Long neurotoxin 1 (90 aa).

An N-terminal signal peptide occupies residues 1-21 (MKTLLLTLVVVTIVCLDVGNS). Cystine bridges form between cysteine 24/cysteine 42, cysteine 35/cysteine 63, cysteine 48/cysteine 52, cysteine 67/cysteine 78, and cysteine 79/cysteine 84.

It belongs to the three-finger toxin family. Long-chain subfamily. Type II alpha-neurotoxin sub-subfamily. As to expression, expressed by the venom gland.

It localises to the secreted. Functionally, binds with high affinity to muscular (alpha-1/CHRNA1) and neuronal (alpha-7/CHRNA7) nicotinic acetylcholine receptor (nAChR) and inhibits acetylcholine from binding to the receptor, thereby impairing neuromuscular and neuronal transmission. This is Long neurotoxin 1 from Austrelaps superbus (Lowland copperhead snake).